Here is a 401-residue protein sequence, read N- to C-terminus: S-adenosylmethionine synthase (401 aa).

Residue 136–141 participates in ATP binding; it reads GQGSVD.

This sequence belongs to the AdoMet synthase 2 family. It depends on Mg(2+) as a cofactor.

It catalyses the reaction L-methionine + ATP + H2O = S-adenosyl-L-methionine + phosphate + diphosphate. It participates in amino-acid biosynthesis; S-adenosyl-L-methionine biosynthesis; S-adenosyl-L-methionine from L-methionine: step 1/1. Catalyzes the formation of S-adenosylmethionine from methionine and ATP. This chain is S-adenosylmethionine synthase (mat), found in Pyrococcus horikoshii (strain ATCC 700860 / DSM 12428 / JCM 9974 / NBRC 100139 / OT-3).